The chain runs to 215 residues: 3-demethoxyubiquinol 3-hydroxylase (215 aa).

Glutamate 64, glutamate 94, histidine 97, glutamate 146, glutamate 178, and histidine 181 together coordinate Fe cation.

The protein belongs to the COQ7 family. Fe cation serves as cofactor.

The protein localises to the cell membrane. The catalysed reaction is a 5-methoxy-2-methyl-3-(all-trans-polyprenyl)benzene-1,4-diol + AH2 + O2 = a 3-demethylubiquinol + A + H2O. Its pathway is cofactor biosynthesis; ubiquinone biosynthesis. Its function is as follows. Catalyzes the hydroxylation of 2-nonaprenyl-3-methyl-6-methoxy-1,4-benzoquinol during ubiquinone biosynthesis. The protein is 3-demethoxyubiquinol 3-hydroxylase of Coxiella burnetii (strain CbuG_Q212) (Coxiella burnetii (strain Q212)).